The chain runs to 174 residues: Amino-acid acetyltransferase (174 aa).

In terms of domain architecture, N-acetyltransferase spans 10-148 (PVVRRARTSD…VFDEMCRSYD (139 aa)).

Belongs to the acetyltransferase family. Homodimer and homotetramer.

The enzyme catalyses L-glutamate + acetyl-CoA = N-acetyl-L-glutamate + CoA + H(+). It functions in the pathway amino-acid biosynthesis; L-arginine biosynthesis; N(2)-acetyl-L-ornithine from L-glutamate: step 1/4. Its activity is regulated as follows. Inhibited by L-arginine. Catalyzes the conversion of L-glutamate to alpha-N-acetyl-L-glutamate. L-glutamine is a significantly better substrate compared to L-glutamate. This is Amino-acid acetyltransferase (argA) from Mycobacterium tuberculosis (strain ATCC 25618 / H37Rv).